We begin with the raw amino-acid sequence, 293 residues long: Homoserine O-acetyltransferase (293 aa).

Cys141 functions as the Acyl-thioester intermediate in the catalytic mechanism. Substrate contacts are provided by Lys162 and Ser190. Residue His234 is the Proton acceptor of the active site. Glu236 is an active-site residue. Position 248 (Arg248) interacts with substrate.

Belongs to the MetA family.

It is found in the cytoplasm. The enzyme catalyses L-homoserine + acetyl-CoA = O-acetyl-L-homoserine + CoA. Its pathway is amino-acid biosynthesis; L-methionine biosynthesis via de novo pathway; O-acetyl-L-homoserine from L-homoserine: step 1/1. In terms of biological role, transfers an acetyl group from acetyl-CoA to L-homoserine, forming acetyl-L-homoserine. This Campylobacter jejuni subsp. jejuni serotype O:2 (strain ATCC 700819 / NCTC 11168) protein is Homoserine O-acetyltransferase.